A 413-amino-acid chain; its full sequence is Paxillin homolog 1 (413 aa).

The segment covering 33–45 (HISDRRSQSRDDF) has biased composition (basic and acidic residues). The interval 33-157 (HISDRRSQSR…PLHSDSMIGT (125 aa)) is disordered. A compositionally biased stretch (polar residues) spans 49 to 69 (YDLQGNLNTQSVSNGNITTSP). Positions 73–92 (RSSEGKDYSKSQERIYENES) are enriched in basic and acidic residues. The span at 118–143 (ASSSRKSLGPPSQAQSYSDVRSNGRS) shows a compositional bias: polar residues. LIM zinc-binding domains are found at residues 174–232 (GDCA…NQFS), 233–292 (PKCQ…LFAP), 293–350 (KCNG…ESRG), and 351–410 (SICS…TYAL).

Belongs to the paxillin family. Isoform a: Expressed in all 95 body wall muscle cells as well as in the pharyngeal muscle cells (at protein level). Isoform c: Expressed in the body wall muscle cells and in the pharyngeal muscle cells.

Its subcellular location is the cell junction. It is found in the adherens junction. The protein resides in the cell membrane. It localises to the cytoplasm. The protein localises to the myofibril. Its subcellular location is the sarcomere. It is found in the m line. The protein resides in the cell projection. It localises to the podosome. Required for myofilament organization of the pharyngeal sarcomeres and for pharyngeal muscle contractions and hence for pharyngeal pumping. Together with lin-8, might be required for myofilament organization in the body wall muscles. The protein is Paxillin homolog 1 (pxl-1) of Caenorhabditis elegans.